A 135-amino-acid chain; its full sequence is Fatty acid-binding protein homolog 6 (135 aa).

A fatty acid contacts are provided by residues arginine 110 and 130–132 (REY).

It belongs to the calycin superfamily. Fatty-acid binding protein (FABP) family.

The protein is Fatty acid-binding protein homolog 6 (lbp-6) of Caenorhabditis elegans.